The primary structure comprises 233 residues: Large ribosomal subunit protein uL1 (233 aa).

This sequence belongs to the universal ribosomal protein uL1 family. In terms of assembly, part of the 50S ribosomal subunit.

Its function is as follows. Binds directly to 23S rRNA. The L1 stalk is quite mobile in the ribosome, and is involved in E site tRNA release. In terms of biological role, protein L1 is also a translational repressor protein, it controls the translation of the L11 operon by binding to its mRNA. The polypeptide is Large ribosomal subunit protein uL1 (Shewanella sp. (strain MR-4)).